Reading from the N-terminus, the 542-residue chain is Chaperonin GroEL (542 aa).

Residues 29–32 (TLGP), K50, 86–90 (DGTTT), G415, and D495 contribute to the ATP site.

This sequence belongs to the chaperonin (HSP60) family. Forms a cylinder of 14 subunits composed of two heptameric rings stacked back-to-back. Interacts with the co-chaperonin GroES.

It localises to the cytoplasm. The catalysed reaction is ATP + H2O + a folded polypeptide = ADP + phosphate + an unfolded polypeptide.. Its function is as follows. Together with its co-chaperonin GroES, plays an essential role in assisting protein folding. The GroEL-GroES system forms a nano-cage that allows encapsulation of the non-native substrate proteins and provides a physical environment optimized to promote and accelerate protein folding. The chain is Chaperonin GroEL from Azobacteroides pseudotrichonymphae genomovar. CFP2.